The following is a 191-amino-acid chain: Protein YceI (191 aa).

The N-terminal stretch at 1 to 22 is a signal peptide; that stretch reads MKKNLLGFTLASLLFTTGSAVA.

The protein belongs to the UPF0312 family. Type 1 subfamily.

It is found in the periplasm. The chain is Protein YceI from Salmonella newport (strain SL254).